Reading from the N-terminus, the 156-residue chain is Ribosomal RNA large subunit methyltransferase H (156 aa).

S-adenosyl-L-methionine is bound by residues leucine 73, glycine 104, and 123–128 (LSALTL).

It belongs to the RNA methyltransferase RlmH family. As to quaternary structure, homodimer.

The protein resides in the cytoplasm. The enzyme catalyses pseudouridine(1915) in 23S rRNA + S-adenosyl-L-methionine = N(3)-methylpseudouridine(1915) in 23S rRNA + S-adenosyl-L-homocysteine + H(+). In terms of biological role, specifically methylates the pseudouridine at position 1915 (m3Psi1915) in 23S rRNA. This is Ribosomal RNA large subunit methyltransferase H from Shewanella loihica (strain ATCC BAA-1088 / PV-4).